A 27-amino-acid chain; its full sequence is thr operon leader peptide (27 aa).

Belongs to the thr operon leader peptide family.

This protein is involved in control of the biosynthesis of threonine. The chain is thr operon leader peptide from Escherichia coli O157:H7.